Reading from the N-terminus, the 271-residue chain is Regulatory protein RecX (271 aa).

It belongs to the RecX family.

It is found in the cytoplasm. Its function is as follows. Modulates RecA activity. This chain is Regulatory protein RecX, found in Lactobacillus delbrueckii subsp. bulgaricus (strain ATCC 11842 / DSM 20081 / BCRC 10696 / JCM 1002 / NBRC 13953 / NCIMB 11778 / NCTC 12712 / WDCM 00102 / Lb 14).